We begin with the raw amino-acid sequence, 376 residues long: MSQAIPSSRVGVKINEWYKMIRQFSVPDAEILKAEVEQDIQQMEEDQDLLIYYSLMCFRHQLMLDYLEPGKTYGNRPTVTELLETIETPQKKLTGLLKYYSLFFRGMYEFDQKEYVEAIGYYREAEKELPFVSDDIEKAEFHFKVAEAYYHMKQTHVSMYHILQALDIYQNHPLYSIRTIQSLFVIAGNYDDFKHYDKALPHLEAALELAMDIQNDRFIAISLLNIANSYDRSGDDQMAVEHFQKAAKVSREKVPDLLPKVLFGLSWTLCKAGQTQKAFQFIEEGLDHITARSHKFYKELFLFLQAVYKETVDERKIHDLLSYFEKKNLHAYIEACARSAAAVFESSCHFEQAAAFYRKVLKAQEDILKGECLYAY.

TPR repeat units follow at residues 99 to 132, 139 to 172, 180 to 213, 220 to 253, 259 to 292, and 334 to 367; these read YYSL…LPFV, AEFH…YQNH, IQSL…AMDI, AISL…SREK, PKVL…ITAR, and EACA…QEDI.

It belongs to the Rap family. Homodimer. Interacts with phosphorylated Spo0F. Each RapH protomer is bound to a monomer of Spo0F, forming a heterotetrameric complex. May also interact with non-phosphorylated Spo0F to inhibit the sporulation phosphorelay. Interacts with the C-terminal DNA-binding region of ComA. Does not interact with DegU.

Its subcellular location is the cytoplasm. Its activity is regulated as follows. Both activities are inhibited by RapH. Dual specificity regulatory protein that can control both sporulation and competence by acting on two distinct response regulators: Spo0F and ComA, respectively. Is involved in the temporal separation of competence and sporulation. Acts as a phosphatase that specifically dephosphorylates the sporulation initiation phosphotransferase Spo0F and inhibits its activity. RapH can also antagonize sporulation by sterically blocking phosphoryl transfer to and from Spo0F. In addition, inhibits the activity of ComA, a transcriptional factor that regulates the development of genetic competence. Acts by binding to ComA, leading to the inhibition of its DNA-binding activity. This Bacillus subtilis (strain 168) protein is Response regulator aspartate phosphatase H (rapH).